Here is a 548-residue protein sequence, read N- to C-terminus: Probable malate:quinone oxidoreductase (548 aa).

The interval 521-548 (DKPQAADSTPKPQLKPQPVQKEVADIAL) is disordered. Over residues 530–541 (PKPQLKPQPVQK) the composition is skewed to low complexity.

The protein belongs to the MQO family. FAD is required as a cofactor.

It catalyses the reaction (S)-malate + a quinone = a quinol + oxaloacetate. Its pathway is carbohydrate metabolism; tricarboxylic acid cycle; oxaloacetate from (S)-malate (quinone route): step 1/1. The protein is Probable malate:quinone oxidoreductase of Shigella sonnei (strain Ss046).